The primary structure comprises 219 residues: Elongation factor Ts (219 aa).

Residues 82 to 85 (TDFV) are involved in Mg(2+) ion dislocation from EF-Tu.

The protein belongs to the EF-Ts family.

The protein resides in the cytoplasm. Associates with the EF-Tu.GDP complex and induces the exchange of GDP to GTP. It remains bound to the aminoacyl-tRNA.EF-Tu.GTP complex up to the GTP hydrolysis stage on the ribosome. This chain is Elongation factor Ts, found in Anaeromyxobacter dehalogenans (strain 2CP-C).